The primary structure comprises 522 residues: Lysine--tRNA ligase (522 aa).

The 'HIGH' region signature appears at 44 to 52 (PSGLPHIGT). Residues 290–294 (KISKS) carry the 'KMSKS' region motif. Lys-293 contacts ATP.

It belongs to the class-I aminoacyl-tRNA synthetase family.

The protein localises to the cytoplasm. The catalysed reaction is tRNA(Lys) + L-lysine + ATP = L-lysyl-tRNA(Lys) + AMP + diphosphate. In Rickettsia peacockii (strain Rustic), this protein is Lysine--tRNA ligase.